The following is a 218-amino-acid chain: Glutathione S-transferase (218 aa).

The GST N-terminal domain occupies 2 to 88; sequence PVTLGYWDIR…YIARKHDLCG (87 aa). Glutathione contacts are provided by residues 7–8, 46–50, 59–60, and 72–73; these read YW, WLNEK, NL, and QS. Positions 90 to 208 constitute a GST C-terminal domain; the sequence is TEEERIQLDI…KSSRFSCKQI (119 aa). Tyrosine 116 contributes to the substrate binding site.

The protein belongs to the GST superfamily. Mu family. As to quaternary structure, homodimer.

It is found in the cytoplasm. The catalysed reaction is RX + glutathione = an S-substituted glutathione + a halide anion + H(+). Its function is as follows. Conjugation of reduced glutathione to a wide number of exogenous and endogenous hydrophobic electrophiles. The protein is Glutathione S-transferase of Mesocricetus auratus (Golden hamster).